We begin with the raw amino-acid sequence, 887 residues long: Alanine--tRNA ligase (887 aa).

Zn(2+) contacts are provided by histidine 581, histidine 585, cysteine 683, and histidine 687.

The protein belongs to the class-II aminoacyl-tRNA synthetase family. Zn(2+) serves as cofactor.

It localises to the cytoplasm. It catalyses the reaction tRNA(Ala) + L-alanine + ATP = L-alanyl-tRNA(Ala) + AMP + diphosphate. Functionally, catalyzes the attachment of alanine to tRNA(Ala) in a two-step reaction: alanine is first activated by ATP to form Ala-AMP and then transferred to the acceptor end of tRNA(Ala). Also edits incorrectly charged Ser-tRNA(Ala) and Gly-tRNA(Ala) via its editing domain. The polypeptide is Alanine--tRNA ligase (Ehrlichia canis (strain Jake)).